The primary structure comprises 552 residues: Arginine--tRNA ligase (552 aa).

The 'HIGH' region motif lies at 123–133; sequence ANPTGPLTIGR.

It belongs to the class-I aminoacyl-tRNA synthetase family. As to quaternary structure, monomer.

The protein localises to the cytoplasm. The enzyme catalyses tRNA(Arg) + L-arginine + ATP = L-arginyl-tRNA(Arg) + AMP + diphosphate. The sequence is that of Arginine--tRNA ligase from Chlorobium phaeovibrioides (strain DSM 265 / 1930) (Prosthecochloris vibrioformis (strain DSM 265)).